Here is a 92-residue protein sequence, read N- to C-terminus: UPF0473 protein BC_4380 (92 aa).

It belongs to the UPF0473 family.

The chain is UPF0473 protein BC_4380 from Bacillus cereus (strain ATCC 14579 / DSM 31 / CCUG 7414 / JCM 2152 / NBRC 15305 / NCIMB 9373 / NCTC 2599 / NRRL B-3711).